The primary structure comprises 541 residues: Chaperonin GroEL 2 (541 aa).

ATP contacts are provided by residues 29-32 (TLGP), 86-90 (DGTTT), G413, 476-478 (NAA), and D492.

This sequence belongs to the chaperonin (HSP60) family. In terms of assembly, forms a cylinder of 14 subunits composed of two heptameric rings stacked back-to-back. Interacts with the co-chaperonin GroES.

The protein resides in the secreted. It localises to the capsule. Its subcellular location is the cell surface. It is found in the cell wall. It catalyses the reaction ATP + H2O + a folded polypeptide = ADP + phosphate + an unfolded polypeptide.. Its function is as follows. Together with its co-chaperonin GroES, plays an essential role in assisting protein folding. The GroEL-GroES system forms a nano-cage that allows encapsulation of the non-native substrate proteins and provides a physical environment optimized to promote and accelerate protein folding. The sequence is that of Chaperonin GroEL 2 from Mycobacterium avium (strain 104).